A 282-amino-acid polypeptide reads, in one-letter code: Pantothenate synthetase (282 aa).

30-37 (MGYLHEGH) lines the ATP pocket. The Proton donor role is filled by H37. Q61 is a binding site for (R)-pantoate. Q61 contributes to the beta-alanine binding site. 147 to 150 (GQKD) contacts ATP. Q153 is a binding site for (R)-pantoate. ATP-binding positions include V176 and 184–187 (LSSR).

It belongs to the pantothenate synthetase family. As to quaternary structure, homodimer.

It is found in the cytoplasm. It catalyses the reaction (R)-pantoate + beta-alanine + ATP = (R)-pantothenate + AMP + diphosphate + H(+). It functions in the pathway cofactor biosynthesis; (R)-pantothenate biosynthesis; (R)-pantothenate from (R)-pantoate and beta-alanine: step 1/1. Its function is as follows. Catalyzes the condensation of pantoate with beta-alanine in an ATP-dependent reaction via a pantoyl-adenylate intermediate. The protein is Pantothenate synthetase of Desulfitobacterium hafniense (strain DSM 10664 / DCB-2).